Here is a 74-residue protein sequence, read N- to C-terminus: ATP synthase F(1) complex subunit epsilon, mitochondrial (74 aa).

This sequence belongs to the eukaryotic ATPase epsilon family. Component of the ATP synthase complex composed at least of ATP5F1A/subunit alpha, ATP5F1B/subunit beta, ATP5MC1/subunit c (homooctomer), MT-ATP6/subunit a, MT-ATP8/subunit 8, ATP5ME/subunit e, ATP5MF/subunit f, ATP5MG/subunit g, ATP5MK/subunit k, ATP5MJ/subunit j, ATP5F1C/subunit gamma, ATP5F1D/subunit delta, ATP5F1E/subunit epsilon, ATP5PF/subunit F6, ATP5PB/subunit b, ATP5PD/subunit d, ATP5PO/subunit OSCP. ATP synthase complex consists of a soluble F(1) head domain (subunits alpha(3) and beta(3)) - the catalytic core - and a membrane F(0) domain - the membrane proton channel (subunits c, a, 8, e, f, g, k and j). These two domains are linked by a central stalk (subunits gamma, delta, and epsilon) rotating inside the F1 region and a stationary peripheral stalk (subunits F6, b, d, and OSCP).

The protein localises to the mitochondrion. It is found in the mitochondrion inner membrane. Functionally, subunit epsilon, of the mitochondrial membrane ATP synthase complex (F(1)F(0) ATP synthase or Complex V) that produces ATP from ADP in the presence of a proton gradient across the membrane which is generated by electron transport complexes of the respiratory chain. ATP synthase complex consist of a soluble F(1) head domain - the catalytic core - and a membrane F(1) domain - the membrane proton channel. These two domains are linked by a central stalk rotating inside the F(1) region and a stationary peripheral stalk. During catalysis, ATP synthesis in the catalytic domain of F(1) is coupled via a rotary mechanism of the central stalk subunits to proton translocation. In vivo, can only synthesize ATP although its ATP hydrolase activity can be activated artificially in vitro. May be essential for the assembly of F(1) and may play an important role in the incorporation of the hydrophobic subunit c into the F(1)-c oligomer rotor of the mitochondrial ATP synthase complex. The protein is ATP synthase F(1) complex subunit epsilon, mitochondrial of Dictyostelium discoideum (Social amoeba).